The following is a 179-amino-acid chain: ATP synthase subunit delta (179 aa).

The protein belongs to the ATPase delta chain family. In terms of assembly, F-type ATPases have 2 components, F(1) - the catalytic core - and F(0) - the membrane proton channel. F(1) has five subunits: alpha(3), beta(3), gamma(1), delta(1), epsilon(1). F(0) has three main subunits: a(1), b(2) and c(10-14). The alpha and beta chains form an alternating ring which encloses part of the gamma chain. F(1) is attached to F(0) by a central stalk formed by the gamma and epsilon chains, while a peripheral stalk is formed by the delta and b chains.

Its subcellular location is the cell inner membrane. Its function is as follows. F(1)F(0) ATP synthase produces ATP from ADP in the presence of a proton or sodium gradient. F-type ATPases consist of two structural domains, F(1) containing the extramembraneous catalytic core and F(0) containing the membrane proton channel, linked together by a central stalk and a peripheral stalk. During catalysis, ATP synthesis in the catalytic domain of F(1) is coupled via a rotary mechanism of the central stalk subunits to proton translocation. Functionally, this protein is part of the stalk that links CF(0) to CF(1). It either transmits conformational changes from CF(0) to CF(1) or is implicated in proton conduction. The chain is ATP synthase subunit delta from Delftia acidovorans (strain DSM 14801 / SPH-1).